Here is a 318-residue protein sequence, read N- to C-terminus: L-lactate dehydrogenase 1 (318 aa).

NAD(+) is bound by residues Val-17, Asp-38, Lys-43, Tyr-69, and 83-84 (GA). Substrate-binding positions include Gln-86, Arg-92, and 124-127 (NPVD). NAD(+) is bound by residues 122–124 (ATN) and Ser-147. A substrate-binding site is contributed by 152–155 (DTGR). Arg-157 and His-172 together coordinate beta-D-fructose 1,6-bisphosphate. Residue His-179 is the Proton acceptor of the active site. Tyr-224 is subject to Phosphotyrosine. Residue Thr-233 participates in substrate binding.

Belongs to the LDH/MDH superfamily. LDH family. As to quaternary structure, homotetramer.

It is found in the cytoplasm. The enzyme catalyses (S)-lactate + NAD(+) = pyruvate + NADH + H(+). The protein operates within fermentation; pyruvate fermentation to lactate; (S)-lactate from pyruvate: step 1/1. Allosterically activated by fructose 1,6-bisphosphate (FBP). Catalyzes the conversion of lactate to pyruvate. This is L-lactate dehydrogenase 1 from Peribacillus psychrosaccharolyticus (Bacillus psychrosaccharolyticus).